We begin with the raw amino-acid sequence, 438 residues long: MINIRPDEISNIIRQQIESYDQEVQIDNVGTVLQVGDGIARVYGLEQVMAGELLEFEDKTVGIALNLENDNVGVVLMGPGLDILEGGSVRSTGKIAQIPVGDGFLGRVVDSLARPIDGKGDIDATESRLVESMAPGIITRKSVCEPVQTGITAIDSMIPIGRGQRELIIGDRQTGKTSVAIDTIINQKSEDVICVYVAIGQKASSVASIVTTLEEKGALGYTIVVASNADDPATLQYIAPYTGAALAEYFMYKGKATLIIYDDLSKQASAYRQMSLLLRRPPGREAYPGDVFYLHSRLLERAAKLSDALGGGSMTALPIIETQAGDVSAYIPTNVISITDGQIFLSGDLFNAGIRPAINVGISVSRVGSAAQTKAMKQVAGKLKLELAQFAELEAFSQFASDLDAATQAELARGQRLREMLKQPQNSPIPVEEQVALI.

ATP is bound at residue 170 to 177 (GDRQTGKT).

It belongs to the ATPase alpha/beta chains family. F-type ATPases have 2 components, CF(1) - the catalytic core - and CF(0) - the membrane proton channel. CF(1) has five subunits: alpha(3), beta(3), gamma(1), delta(1), epsilon(1). CF(0) has four main subunits: a, b, b' and c.

It is found in the plastid. The protein localises to the chloroplast thylakoid membrane. The enzyme catalyses ATP + H2O + 4 H(+)(in) = ADP + phosphate + 5 H(+)(out). In terms of biological role, produces ATP from ADP in the presence of a proton gradient across the membrane. The alpha chain is a regulatory subunit. The chain is ATP synthase subunit alpha, chloroplastic from Ochrosphaera neapolitana.